We begin with the raw amino-acid sequence, 361 residues long: Phosphoserine aminotransferase (361 aa).

Arg-43 lines the L-glutamate pocket. Pyridoxal 5'-phosphate is bound by residues 77 to 78, Trp-103, Thr-153, Asp-173, and Gln-196; that span reads AS. Lys-197 carries the N6-(pyridoxal phosphate)lysine modification. 238–239 is a pyridoxal 5'-phosphate binding site; the sequence is NT.

Belongs to the class-V pyridoxal-phosphate-dependent aminotransferase family. SerC subfamily. Homodimer. It depends on pyridoxal 5'-phosphate as a cofactor.

The protein resides in the cytoplasm. It carries out the reaction O-phospho-L-serine + 2-oxoglutarate = 3-phosphooxypyruvate + L-glutamate. It catalyses the reaction 4-(phosphooxy)-L-threonine + 2-oxoglutarate = (R)-3-hydroxy-2-oxo-4-phosphooxybutanoate + L-glutamate. It participates in amino-acid biosynthesis; L-serine biosynthesis; L-serine from 3-phospho-D-glycerate: step 2/3. Its pathway is cofactor biosynthesis; pyridoxine 5'-phosphate biosynthesis; pyridoxine 5'-phosphate from D-erythrose 4-phosphate: step 3/5. Its function is as follows. Catalyzes the reversible conversion of 3-phosphohydroxypyruvate to phosphoserine and of 3-hydroxy-2-oxo-4-phosphonooxybutanoate to phosphohydroxythreonine. This chain is Phosphoserine aminotransferase, found in Azotobacter vinelandii (strain DJ / ATCC BAA-1303).